Reading from the N-terminus, the 280-residue chain is Polyamine aminopropyltransferase 1 (280 aa).

A PABS domain is found at 3 to 237; that stretch reads DIVFIERDPY…YWWTFSIASK (235 aa). S-methyl-5'-thioadenosine is bound at residue Q33. The spermidine site is built by H64 and D88. S-methyl-5'-thioadenosine is bound by residues D108 and 139 to 140; that span reads DG. Catalysis depends on D157, which acts as the Proton acceptor. 157-160 lines the spermidine pocket; sequence DSTD.

The protein belongs to the spermidine/spermine synthase family. As to quaternary structure, homodimer or homotetramer.

The protein localises to the cytoplasm. It carries out the reaction S-adenosyl 3-(methylsulfanyl)propylamine + putrescine = S-methyl-5'-thioadenosine + spermidine + H(+). It participates in amine and polyamine biosynthesis; spermidine biosynthesis; spermidine from putrescine: step 1/1. Catalyzes the irreversible transfer of a propylamine group from the amino donor S-adenosylmethioninamine (decarboxy-AdoMet) to putrescine (1,4-diaminobutane) to yield spermidine. This Aquifex aeolicus (strain VF5) protein is Polyamine aminopropyltransferase 1.